The chain runs to 461 residues: Elongation factor 1-alpha (461 aa).

The residue at position 2 (glycine 2) is a N,N,N-trimethylglycine. One can recognise a tr-type G domain in the interval 5 to 242 (KIHINIVVIG…DAILPPSRPT (238 aa)). The G1 stretch occupies residues 14-21 (GHVDSGKS). A GTP-binding site is contributed by 14 to 21 (GHVDSGKS). The interval 70–74 (GITID) is G2. The tract at residues 91-94 (DAPG) is G3. GTP is bound by residues 153–156 (NKMD) and 194–196 (SGW). The interval 153–156 (NKMD) is G4. Residues 194–196 (SGW) form a G5 region. 2 positions are modified to 5-glutamyl glycerylphosphorylethanolamine: glutamate 301 and glutamate 374.

The protein belongs to the TRAFAC class translation factor GTPase superfamily. Classic translation factor GTPase family. EF-Tu/EF-1A subfamily.

The protein resides in the cytoplasm. The catalysed reaction is GTP + H2O = GDP + phosphate + H(+). Functionally, translation elongation factor that catalyzes the GTP-dependent binding of aminoacyl-tRNA (aa-tRNA) to the A-site of ribosomes during the elongation phase of protein synthesis. Base pairing between the mRNA codon and the aa-tRNA anticodon promotes GTP hydrolysis, releasing the aa-tRNA from EEF1A1 and allowing its accommodation into the ribosome. The growing protein chain is subsequently transferred from the P-site peptidyl tRNA to the A-site aa-tRNA, extending it by one amino acid through ribosome-catalyzed peptide bond formation. The polypeptide is Elongation factor 1-alpha (eef1a) (Oryzias latipes (Japanese rice fish)).